Consider the following 238-residue polypeptide: Survival of motor neuron-related-splicing factor 30 (238 aa).

The region spanning 72 to 132 (SWKVGDKCMA…KPVEEGRKAK (61 aa)) is the Tudor domain. Residues 142 to 160 (KKEMIAQQREYKKKKALKK) carry the Nuclear localization signal motif. Ser201 carries the phosphoserine modification. Residue Lys219 is modified to N6-acetyllysine.

Belongs to the SMN family. In terms of assembly, associates with spliceosomes. Associates with U4/U5/U6 tri-snRNP and with U2 snRNP.

Its subcellular location is the nucleus speckle. It is found in the nucleus. It localises to the cajal body. Involved in spliceosome assembly. The sequence is that of Survival of motor neuron-related-splicing factor 30 (SMNDC1) from Bos taurus (Bovine).